Consider the following 328-residue polypeptide: Beta-ketoacyl-[acyl-carrier-protein] synthase III (328 aa).

Residues cysteine 113 and histidine 253 contribute to the active site. The interval 254–258 (QANLR) is ACP-binding. Asparagine 283 is an active-site residue.

This sequence belongs to the thiolase-like superfamily. FabH family. In terms of assembly, homodimer.

The protein resides in the cytoplasm. The enzyme catalyses malonyl-[ACP] + acetyl-CoA + H(+) = 3-oxobutanoyl-[ACP] + CO2 + CoA. Its pathway is lipid metabolism; fatty acid biosynthesis. Catalyzes the condensation reaction of fatty acid synthesis by the addition to an acyl acceptor of two carbons from malonyl-ACP. Catalyzes the first condensation reaction which initiates fatty acid synthesis and may therefore play a role in governing the total rate of fatty acid production. Possesses both acetoacetyl-ACP synthase and acetyl transacylase activities. Its substrate specificity determines the biosynthesis of branched-chain and/or straight-chain of fatty acids. The sequence is that of Beta-ketoacyl-[acyl-carrier-protein] synthase III from Fusobacterium nucleatum subsp. nucleatum (strain ATCC 25586 / DSM 15643 / BCRC 10681 / CIP 101130 / JCM 8532 / KCTC 2640 / LMG 13131 / VPI 4355).